A 144-amino-acid polypeptide reads, in one-letter code: Large ribosomal subunit protein uL11 (144 aa).

The protein belongs to the universal ribosomal protein uL11 family. Part of the ribosomal stalk of the 50S ribosomal subunit. Interacts with L10 and the large rRNA to form the base of the stalk. L10 forms an elongated spine to which L12 dimers bind in a sequential fashion forming a multimeric L10(L12)X complex. One or more lysine residues are methylated.

Its function is as follows. Forms part of the ribosomal stalk which helps the ribosome interact with GTP-bound translation factors. The chain is Large ribosomal subunit protein uL11 from Francisella tularensis subsp. mediasiatica (strain FSC147).